Reading from the N-terminus, the 448-residue chain is Asparagine--tRNA ligase (448 aa).

It belongs to the class-II aminoacyl-tRNA synthetase family. As to quaternary structure, homodimer.

It localises to the cytoplasm. The catalysed reaction is tRNA(Asn) + L-asparagine + ATP = L-asparaginyl-tRNA(Asn) + AMP + diphosphate + H(+). The chain is Asparagine--tRNA ligase from Streptococcus thermophilus (strain CNRZ 1066).